We begin with the raw amino-acid sequence, 153 residues long: Lipoprotein signal peptidase (153 aa).

The next 2 membrane-spanning stretches (helical) occupy residues 52 to 72 (ILAG…IGIV) and 81 to 101 (GQML…GNFI). Active-site residues include Asp111 and Asp129. The chain crosses the membrane as a helical span at residues 124–144 (IFNIADSSLCVGVILLFIHML).

Belongs to the peptidase A8 family.

It localises to the cell membrane. It carries out the reaction Release of signal peptides from bacterial membrane prolipoproteins. Hydrolyzes -Xaa-Yaa-Zaa-|-(S,diacylglyceryl)Cys-, in which Xaa is hydrophobic (preferably Leu), and Yaa (Ala or Ser) and Zaa (Gly or Ala) have small, neutral side chains.. Its pathway is protein modification; lipoprotein biosynthesis (signal peptide cleavage). In terms of biological role, this protein specifically catalyzes the removal of signal peptides from prolipoproteins. This chain is Lipoprotein signal peptidase, found in Bacillus velezensis (strain DSM 23117 / BGSC 10A6 / LMG 26770 / FZB42) (Bacillus amyloliquefaciens subsp. plantarum).